A 406-amino-acid polypeptide reads, in one-letter code: Probable 2,3-bisphosphoglycerate-independent phosphoglycerate mutase (406 aa).

It belongs to the BPG-independent phosphoglycerate mutase family. A-PGAM subfamily.

It catalyses the reaction (2R)-2-phosphoglycerate = (2R)-3-phosphoglycerate. It participates in carbohydrate degradation; glycolysis; pyruvate from D-glyceraldehyde 3-phosphate: step 3/5. In terms of biological role, catalyzes the interconversion of 2-phosphoglycerate and 3-phosphoglycerate. In Thermus thermophilus (strain ATCC 27634 / DSM 579 / HB8), this protein is Probable 2,3-bisphosphoglycerate-independent phosphoglycerate mutase.